The chain runs to 293 residues: Phosphoribosylaminoimidazole-succinocarboxamide synthase (293 aa).

This sequence belongs to the SAICAR synthetase family.

It catalyses the reaction 5-amino-1-(5-phospho-D-ribosyl)imidazole-4-carboxylate + L-aspartate + ATP = (2S)-2-[5-amino-1-(5-phospho-beta-D-ribosyl)imidazole-4-carboxamido]succinate + ADP + phosphate + 2 H(+). It functions in the pathway purine metabolism; IMP biosynthesis via de novo pathway; 5-amino-1-(5-phospho-D-ribosyl)imidazole-4-carboxamide from 5-amino-1-(5-phospho-D-ribosyl)imidazole-4-carboxylate: step 1/2. This chain is Phosphoribosylaminoimidazole-succinocarboxamide synthase, found in Bordetella petrii (strain ATCC BAA-461 / DSM 12804 / CCUG 43448).